The following is a 120-amino-acid chain: Ribosome-binding factor A (120 aa).

This sequence belongs to the RbfA family. Monomer. Binds 30S ribosomal subunits, but not 50S ribosomal subunits or 70S ribosomes.

It is found in the cytoplasm. Functionally, one of several proteins that assist in the late maturation steps of the functional core of the 30S ribosomal subunit. Associates with free 30S ribosomal subunits (but not with 30S subunits that are part of 70S ribosomes or polysomes). Required for efficient processing of 16S rRNA. May interact with the 5'-terminal helix region of 16S rRNA. This Rickettsia africae (strain ESF-5) protein is Ribosome-binding factor A.